A 194-amino-acid chain; its full sequence is IMP cyclohydrolase (194 aa).

It belongs to the archaeal IMP cyclohydrolase family.

It catalyses the reaction IMP + H2O = 5-formamido-1-(5-phospho-D-ribosyl)imidazole-4-carboxamide. It functions in the pathway purine metabolism; IMP biosynthesis via de novo pathway; IMP from 5-formamido-1-(5-phospho-D-ribosyl)imidazole-4-carboxamide: step 1/1. Functionally, catalyzes the cyclization of 5-formylamidoimidazole-4-carboxamide ribonucleotide to IMP. The chain is IMP cyclohydrolase from Halobacterium salinarum (strain ATCC 29341 / DSM 671 / R1).